The primary structure comprises 131 residues: Peptide methionine sulfoxide reductase MsrB (131 aa).

The MsrB domain maps to 8-130; sequence LDEWRSMLDP…NSVCIDLRPR (123 aa). Zn(2+) contacts are provided by Cys47, Cys50, Cys96, and Cys99. Cys119 serves as the catalytic Nucleophile.

This sequence belongs to the MsrB Met sulfoxide reductase family. Zn(2+) serves as cofactor.

It carries out the reaction L-methionyl-[protein] + [thioredoxin]-disulfide + H2O = L-methionyl-(R)-S-oxide-[protein] + [thioredoxin]-dithiol. The chain is Peptide methionine sulfoxide reductase MsrB from Pseudomonas putida (strain ATCC 47054 / DSM 6125 / CFBP 8728 / NCIMB 11950 / KT2440).